The sequence spans 130 residues: UPF0102 protein TDE_2303 (130 aa).

This sequence belongs to the UPF0102 family.

The chain is UPF0102 protein TDE_2303 from Treponema denticola (strain ATCC 35405 / DSM 14222 / CIP 103919 / JCM 8153 / KCTC 15104).